The primary structure comprises 393 residues: 4-O-methyl-glucuronoyl methylesterase (393 aa).

A signal peptide spans 1–19 (MKLSAALLAIAAFANVASA). Q20 bears the Pyrrolidone carboxylic acid mark. A disulfide bridge links C22 with C56. N-linked (GlcNAc...) asparagine glycosylation is found at N103 and N168. The GXSYXG catalytic site motif motif lies at 203-208 (GCSRNG). Cystine bridges form between C204-C340 and C236-C312. S205 serves as the catalytic Nucleophile. Substrate contacts are provided by K209, Q251, E259, and W303. H339 acts as the Proton donor/acceptor in catalysis.

Belongs to the carbohydrate esterase 15 (CE15) family.

The protein resides in the secreted. The enzyme catalyses a 4-O-methyl-alpha-D-glucuronosyl ester derivative + H2O = 4-O-methyl-alpha-D-glucuronate derivative + an alcohol + H(+). Glucuronoyl esterase which may play a significant role in biomass degradation, as it is considered to disconnect hemicellulose from lignin through the hydrolysis of the ester bond between 4-O-methyl-D-glucuronic acid residues of glucuronoxylans and aromatic alcohols of lignin. In Schizophyllum commune (strain H4-8 / FGSC 9210) (Split gill fungus), this protein is 4-O-methyl-glucuronoyl methylesterase.